The primary structure comprises 534 residues: CTP synthase (534 aa).

The interval 1–267 (MTKYIFVTGG…DQIVCDHLKL (267 aa)) is amidoligase domain. A CTP-binding site is contributed by serine 13. Serine 13 contacts UTP. 14 to 19 (SIGKGI) is a binding site for ATP. Residue tyrosine 54 coordinates L-glutamine. Aspartate 71 is an ATP binding site. Mg(2+) is bound by residues aspartate 71 and glutamate 141. Residues 148–150 (DIE), 188–193 (KTKPTQ), and lysine 224 each bind CTP. UTP is bound by residues 188–193 (KTKPTQ) and lysine 224. In terms of domain architecture, Glutamine amidotransferase type-1 spans 292–534 (KIALVGKYVE…FVTAAVENMK (243 aa)). An L-glutamine-binding site is contributed by glycine 354. The Nucleophile; for glutamine hydrolysis role is filled by cysteine 381. L-glutamine-binding positions include 382–385 (LGMQ), glutamate 405, and arginine 463. Active-site residues include histidine 508 and glutamate 510.

It belongs to the CTP synthase family. Homotetramer.

The catalysed reaction is UTP + L-glutamine + ATP + H2O = CTP + L-glutamate + ADP + phosphate + 2 H(+). It carries out the reaction L-glutamine + H2O = L-glutamate + NH4(+). It catalyses the reaction UTP + NH4(+) + ATP = CTP + ADP + phosphate + 2 H(+). The protein operates within pyrimidine metabolism; CTP biosynthesis via de novo pathway; CTP from UDP: step 2/2. Its activity is regulated as follows. Allosterically activated by GTP, when glutamine is the substrate; GTP has no effect on the reaction when ammonia is the substrate. The allosteric effector GTP functions by stabilizing the protein conformation that binds the tetrahedral intermediate(s) formed during glutamine hydrolysis. Inhibited by the product CTP, via allosteric rather than competitive inhibition. Functionally, catalyzes the ATP-dependent amination of UTP to CTP with either L-glutamine or ammonia as the source of nitrogen. Regulates intracellular CTP levels through interactions with the four ribonucleotide triphosphates. The polypeptide is CTP synthase (Streptococcus agalactiae serotype V (strain ATCC BAA-611 / 2603 V/R)).